The primary structure comprises 185 residues: Ribosome-recycling factor (185 aa).

It belongs to the RRF family.

It localises to the cytoplasm. Its function is as follows. Responsible for the release of ribosomes from messenger RNA at the termination of protein biosynthesis. May increase the efficiency of translation by recycling ribosomes from one round of translation to another. The chain is Ribosome-recycling factor from Salmonella arizonae (strain ATCC BAA-731 / CDC346-86 / RSK2980).